We begin with the raw amino-acid sequence, 187 residues long: UPF0301 protein PC1_3712 (187 aa).

Belongs to the UPF0301 (AlgH) family.

The protein is UPF0301 protein PC1_3712 of Pectobacterium carotovorum subsp. carotovorum (strain PC1).